Here is a 480-residue protein sequence, read N- to C-terminus: Acetyl-coenzyme A carboxylase carboxyl transferase subunit beta, chloroplastic (480 aa).

Residues 25–48 form a disordered region; sequence TSSLGPIENASESKDPNINDTDKN. The segment covering 35–47 has biased composition (basic and acidic residues); that stretch reads SESKDPNINDTDK. The CoA carboxyltransferase N-terminal domain maps to 216 to 480; it reads LWVQCENCYG…LHTFFPLNQN (265 aa). 4 residues coordinate Zn(2+): C220, C223, C239, and C242. The C4-type zinc finger occupies 220 to 242; the sequence is CENCYGLNYKKFFKSKMNLCEQC.

It belongs to the AccD/PCCB family. As to quaternary structure, acetyl-CoA carboxylase is a heterohexamer composed of biotin carboxyl carrier protein, biotin carboxylase and 2 subunits each of ACCase subunit alpha and ACCase plastid-coded subunit beta (accD). Requires Zn(2+) as cofactor.

The protein localises to the plastid. It is found in the chloroplast stroma. The catalysed reaction is N(6)-carboxybiotinyl-L-lysyl-[protein] + acetyl-CoA = N(6)-biotinyl-L-lysyl-[protein] + malonyl-CoA. It participates in lipid metabolism; malonyl-CoA biosynthesis; malonyl-CoA from acetyl-CoA: step 1/1. Functionally, component of the acetyl coenzyme A carboxylase (ACC) complex. Biotin carboxylase (BC) catalyzes the carboxylation of biotin on its carrier protein (BCCP) and then the CO(2) group is transferred by the transcarboxylase to acetyl-CoA to form malonyl-CoA. This Helianthus annuus (Common sunflower) protein is Acetyl-coenzyme A carboxylase carboxyl transferase subunit beta, chloroplastic.